The sequence spans 347 residues: KRR1 small subunit processome component homolog (347 aa).

The KH domain maps to 124-194 (GCDIIKIGNL…VRDIVLETMN (71 aa)). The span at 231–246 (NKNLSKRKQPKVKKPK) shows a compositional bias: basic residues. Residues 231-347 (NKNLSKRKQP…LLKANKKSKS (117 aa)) form a disordered region. The stretch at 271–304 (FLNKEQKQAKRQQERQTKQAEAAKKQDERRNKDF) forms a coiled coil. 2 stretches are compositionally biased toward basic and acidic residues: residues 272–303 (LNKEQKQAKRQQERQTKQAEAAKKQDERRNKD) and 318–329 (KANDNDSSDSRV). Over residues 337–347 (KLLKANKKSKS) the composition is skewed to basic residues.

It belongs to the KRR1 family. Monomer. Component of the ribosomal small subunit (SSU) processome.

It is found in the nucleus. Its subcellular location is the nucleolus. Functionally, required for 40S ribosome biogenesis. Involved in nucleolar processing of pre-18S ribosomal RNA and ribosome assembly. Binds to RNA. Required for female germline development, cell viability during eye development and for survival of dividing cells and epithelial cells during early wing disk development. The polypeptide is KRR1 small subunit processome component homolog (Drosophila willistoni (Fruit fly)).